The following is a 721-amino-acid chain: Ribosomal RNA large subunit methyltransferase K/L (721 aa).

One can recognise a THUMP domain in the interval 56 to 167 (GMYKACLWSR…REVVTVSIDL (112 aa)).

It belongs to the methyltransferase superfamily. RlmKL family.

Its subcellular location is the cytoplasm. It catalyses the reaction guanosine(2445) in 23S rRNA + S-adenosyl-L-methionine = N(2)-methylguanosine(2445) in 23S rRNA + S-adenosyl-L-homocysteine + H(+). The enzyme catalyses guanosine(2069) in 23S rRNA + S-adenosyl-L-methionine = N(2)-methylguanosine(2069) in 23S rRNA + S-adenosyl-L-homocysteine + H(+). In terms of biological role, specifically methylates the guanine in position 2445 (m2G2445) and the guanine in position 2069 (m7G2069) of 23S rRNA. The chain is Ribosomal RNA large subunit methyltransferase K/L from Marinomonas sp. (strain MWYL1).